Reading from the N-terminus, the 479-residue chain is Serine carboxypeptidase-like 29 (479 aa).

An N-terminal signal peptide occupies residues 1 to 28 (MAKTRGSCCLVNALIAIAFLATAHLCEA). N-linked (GlcNAc...) asparagine glycosylation is found at N47 and N144. 3 disulfides stabilise this stretch: C93–C349, C254–C266, and C290–C317. The active site involves S186. N293 is a glycosylation site (N-linked (GlcNAc...) asparagine). Catalysis depends on residues D386 and H438.

Belongs to the peptidase S10 family. In terms of tissue distribution, expressed in seedlings, roots, leaves and flowers.

It localises to the secreted. In terms of biological role, probable carboxypeptidase. In Arabidopsis thaliana (Mouse-ear cress), this protein is Serine carboxypeptidase-like 29 (SCPL29).